A 2271-amino-acid polypeptide reads, in one-letter code: Protein Ycf2 (2271 aa).

1628 to 1635 (GSIGTGRS) contacts ATP.

It belongs to the Ycf2 family.

The protein localises to the plastid. It is found in the chloroplast stroma. Its function is as follows. Probable ATPase of unknown function. Its presence in a non-photosynthetic plant (Epifagus virginiana) and experiments in tobacco indicate that it has an essential function which is probably not related to photosynthesis. This Illicium oligandrum (Star anise) protein is Protein Ycf2.